We begin with the raw amino-acid sequence, 403 residues long: S-adenosylmethionine synthase (403 aa).

Residue H17 participates in ATP binding. D19 serves as a coordination point for Mg(2+). K(+) is bound at residue E45. Positions 58 and 104 each coordinate L-methionine. The flexible loop stretch occupies residues 104-114 (QSPDIAQGVDT). Residues 179–181 (DGK), 250–251 (KF), D259, 265–266 (RK), A282, and K286 each bind ATP. D259 lines the L-methionine pocket. K290 is a binding site for L-methionine.

It belongs to the AdoMet synthase family. Homotetramer; dimer of dimers. Mg(2+) serves as cofactor. Requires K(+) as cofactor.

It is found in the cytoplasm. It carries out the reaction L-methionine + ATP + H2O = S-adenosyl-L-methionine + phosphate + diphosphate. The protein operates within amino-acid biosynthesis; S-adenosyl-L-methionine biosynthesis; S-adenosyl-L-methionine from L-methionine: step 1/1. Catalyzes the formation of S-adenosylmethionine (AdoMet) from methionine and ATP. The overall synthetic reaction is composed of two sequential steps, AdoMet formation and the subsequent tripolyphosphate hydrolysis which occurs prior to release of AdoMet from the enzyme. This chain is S-adenosylmethionine synthase, found in Mycobacterium marinum (strain ATCC BAA-535 / M).